We begin with the raw amino-acid sequence, 539 residues long: Chaperonin GroEL 1 (539 aa).

ATP-binding positions include 30-33, K51, 87-91, G415, 480-482, and D496; these read TLGP, DGTTT, and NAA.

Belongs to the chaperonin (HSP60) family. Forms a cylinder of 14 subunits composed of two heptameric rings stacked back-to-back. Interacts with the co-chaperonin GroES.

It localises to the cytoplasm. It carries out the reaction ATP + H2O + a folded polypeptide = ADP + phosphate + an unfolded polypeptide.. In terms of biological role, together with its co-chaperonin GroES, plays an essential role in assisting protein folding. The GroEL-GroES system forms a nano-cage that allows encapsulation of the non-native substrate proteins and provides a physical environment optimized to promote and accelerate protein folding. In Erythrobacter litoralis (strain HTCC2594), this protein is Chaperonin GroEL 1.